The chain runs to 228 residues: DNA mismatch repair protein MutH (228 aa).

The protein belongs to the MutH family.

It localises to the cytoplasm. Sequence-specific endonuclease that cleaves unmethylated GATC sequences. It is involved in DNA mismatch repair. The protein is DNA mismatch repair protein MutH of Yersinia enterocolitica serotype O:8 / biotype 1B (strain NCTC 13174 / 8081).